Consider the following 76-residue polypeptide: Small ribosomal subunit protein bS18 (76 aa).

This sequence belongs to the bacterial ribosomal protein bS18 family. In terms of assembly, part of the 30S ribosomal subunit. Forms a tight heterodimer with protein bS6.

Binds as a heterodimer with protein bS6 to the central domain of the 16S rRNA, where it helps stabilize the platform of the 30S subunit. The sequence is that of Small ribosomal subunit protein bS18 from Stenotrophomonas maltophilia (strain R551-3).